Consider the following 647-residue polypeptide: MYDWWVLQLAKLSVSRKLMVGFGVLLALLLLVVISSNRTLTHQTALSEQLAEVASLMEQTQQAEQGRLAFEAGSDPRQAEQVRQTLAGMLQRLQALRDSELDPAALAHQVEAIEAYRKAFDDLAAADQQRSAARGVLVGTAQQALDSFARLEELMDASLAQQAGDPQALQRSRAVADLHQQLLMVRYQVRGYVFERSDKAEQAAFAAFDALRQAATTLRGQLPGEADAALEQAMGSLQGYRGGIEQFRAGVIRTRQAQQAMQSSTQDMARAGRTLTEAGRQLRESTASRDRASLWLIAALALAFGCVAGWAINRQIVRPLDEALAQAEAIAAGDLGKRPQNPLTLQRRDELGQLQRVMQRMGDSLRELVGRISDGVSQLASSAEELSAVTEQTRAGVNSQKVETDQVATAMHEMAATVQDVARNAELASQAARQADEEARQGDAVVDQAVTRIERLASEMDVSSEAMARLKNESEQIGSVLDVIKSVAEQTNLLALNAAIEAARAGDAGRGFAVVADEVRGLAQRTQQSTAEIEGLIQRLQQGAGEAAERLENSRSLTASTVELARRAGAALDSITRTVSDIQNMNLQIATAAEQQSTVAEEINRSVLSVRDVAEQSAAASEQTAASSGELARLGTQLQAQVGRFRL.

Residues methionine 1 to arginine 16 lie on the Cytoplasmic side of the membrane. The helical transmembrane segment at lysine 17 to asparagine 37 threads the bilayer. The Periplasmic segment spans residues arginine 38–arginine 291. The region spanning alanine 45 to alanine 287 is the HBM domain. A helical membrane pass occupies residues alanine 292 to isoleucine 312. Over asparagine 313–leucine 647 the chain is Cytoplasmic. The HAMP domain occupies arginine 314 to glycine 370. The 237-residue stretch at glycine 375 to arginine 611 folds into the Methyl-accepting transducer domain.

The protein belongs to the methyl-accepting chemotaxis (MCP) protein family. In terms of assembly, ligand free ligand-binding domain (LBD) is present in a monomer-dimer equilibrium. AlphaKG binding stabilizes the homodimer.

It is found in the cell inner membrane. In terms of biological role, chemotactic-signal transducers respond to changes in the concentration of attractants and repellents in the environment, transduce a signal from the outside to the inside of the cell, and facilitate sensory adaptation through the variation of the level of methylation. McpK is a chemoreceptor that specifically binds and mediates chemotaxis to alpha-ketoglutarate (alphaKG). This Pseudomonas aeruginosa (strain ATCC 15692 / DSM 22644 / CIP 104116 / JCM 14847 / LMG 12228 / 1C / PRS 101 / PAO1) protein is Methyl-accepting chemotaxis protein McpK.